The primary structure comprises 468 residues: Probable Xaa-Pro aminopeptidase PEPP (468 aa).

Positions 264, 275, 398, and 438 each coordinate Mn(2+).

This sequence belongs to the peptidase M24B family. Requires Mn(2+) as cofactor.

It catalyses the reaction Release of any N-terminal amino acid, including proline, that is linked to proline, even from a dipeptide or tripeptide.. Its function is as follows. Catalyzes the removal of a penultimate prolyl residue from the N-termini of peptides. The protein is Probable Xaa-Pro aminopeptidase PEPP (PEPP) of Paracoccidioides brasiliensis (strain Pb03).